Here is a 1002-residue protein sequence, read N- to C-terminus: DNA-directed RNA polymerase 1B, mitochondrial (1002 aa).

The transit peptide at 1 to 21 (MWRYISKHAYSRKFRNSHDSA) directs the protein to the mitochondrion. Residues Asp-703, Lys-778, and Asp-935 contribute to the active site.

This sequence belongs to the phage and mitochondrial RNA polymerase family.

It localises to the mitochondrion. It catalyses the reaction RNA(n) + a ribonucleoside 5'-triphosphate = RNA(n+1) + diphosphate. Functionally, DNA-dependent RNA polymerase catalyzes the transcription of DNA into RNA using the four ribonucleoside triphosphates as substrates. The chain is DNA-directed RNA polymerase 1B, mitochondrial (RPOT1-TOM) from Nicotiana tabacum (Common tobacco).